The chain runs to 228 residues: L-ribulose-5-phosphate 4-epimerase UlaF (228 aa).

Substrate-binding positions include 26–27, 43–44, and 72–73; these read GN, SG, and SS. Residues D74, H93, and H95 each contribute to the Zn(2+) site. Catalysis depends on D118, which acts as the Proton donor/acceptor. H167 lines the Zn(2+) pocket. Y225 (proton donor/acceptor) is an active-site residue.

The protein belongs to the aldolase class II family. AraD/FucA subfamily. Zn(2+) serves as cofactor.

It catalyses the reaction L-ribulose 5-phosphate = D-xylulose 5-phosphate. Its pathway is cofactor degradation; L-ascorbate degradation; D-xylulose 5-phosphate from L-ascorbate: step 4/4. Functionally, catalyzes the isomerization of L-ribulose 5-phosphate to D-xylulose 5-phosphate. Is involved in the anaerobic L-ascorbate utilization. The protein is L-ribulose-5-phosphate 4-epimerase UlaF of Escherichia coli O7:K1 (strain IAI39 / ExPEC).